Reading from the N-terminus, the 91-residue chain is Acylphosphatase (91 aa).

In terms of domain architecture, Acylphosphatase-like spans 4 to 91 (RYLIKVLGRV…DNEKSFKIVY (88 aa)). Catalysis depends on residues arginine 19 and asparagine 37.

It belongs to the acylphosphatase family.

It catalyses the reaction an acyl phosphate + H2O = a carboxylate + phosphate + H(+). The chain is Acylphosphatase (acyP) from Clostridium acetobutylicum (strain ATCC 824 / DSM 792 / JCM 1419 / IAM 19013 / LMG 5710 / NBRC 13948 / NRRL B-527 / VKM B-1787 / 2291 / W).